Consider the following 301-residue polypeptide: Protein RESTRICTED TEV MOVEMENT 3 (301 aa).

Positions 6–134 (DKKITWTIKN…NGELKIVVEI (129 aa)) constitute an MATH domain. A coiled-coil region spans residues 235–289 (KLDWLEKKLYEVSEKKENEEASETGLQEMEEELKDMKQKCLEMEALVEKEKAKVS).

In terms of assembly, self-interacts. Interacts with RTM1.

In terms of biological role, required for the restriction of long-distance movement of the pathogenic tobacco etch virus (TEV) without causing a hypersensitive response or inducing systemic acquired resistance. In Arabidopsis thaliana (Mouse-ear cress), this protein is Protein RESTRICTED TEV MOVEMENT 3 (RTM3).